The primary structure comprises 1073 residues: Carbamoyl phosphate synthase large chain (1073 aa).

Residues 2–403 (PKRTDIKSIL…SLQKALRGLE (402 aa)) form a carboxyphosphate synthetic domain region. Residues arginine 129, arginine 169, glycine 175, glycine 176, glutamate 208, leucine 210, glutamate 215, glycine 241, isoleucine 242, histidine 243, glutamine 285, and glutamate 299 each contribute to the ATP site. The ATP-grasp 1 domain maps to 133 to 328 (DVAMKKIGLE…IAKVAAKLAV (196 aa)). 3 residues coordinate Mg(2+): glutamine 285, glutamate 299, and asparagine 301. The Mn(2+) site is built by glutamine 285, glutamate 299, and asparagine 301. Positions 404–553 (VGATGFDPKV…YSTYEEECEA (150 aa)) are oligomerization domain. A carbamoyl phosphate synthetic domain region spans residues 554–936 (NPSTDREKIM…AFAKAQLGSN (383 aa)). An ATP-grasp 2 domain is found at 679–870 (QHAVERLKLK…LAKVAARVMA (192 aa)). Arginine 715, histidine 754, leucine 756, glutamate 761, glycine 786, valine 787, histidine 788, serine 789, glutamine 829, and glutamate 841 together coordinate ATP. Mg(2+) contacts are provided by glutamine 829, glutamate 841, and asparagine 843. The Mn(2+) site is built by glutamine 829, glutamate 841, and asparagine 843. Residues 937–1073 (STMKKHGRAL…SVQEMHAQIK (137 aa)) form the MGS-like domain. An allosteric domain region spans residues 937–1073 (STMKKHGRAL…SVQEMHAQIK (137 aa)).

The protein belongs to the CarB family. Composed of two chains; the small (or glutamine) chain promotes the hydrolysis of glutamine to ammonia, which is used by the large (or ammonia) chain to synthesize carbamoyl phosphate. Tetramer of heterodimers (alpha,beta)4. It depends on Mg(2+) as a cofactor. Mn(2+) serves as cofactor.

The enzyme catalyses hydrogencarbonate + L-glutamine + 2 ATP + H2O = carbamoyl phosphate + L-glutamate + 2 ADP + phosphate + 2 H(+). It carries out the reaction hydrogencarbonate + NH4(+) + 2 ATP = carbamoyl phosphate + 2 ADP + phosphate + 2 H(+). It participates in amino-acid biosynthesis; L-arginine biosynthesis; carbamoyl phosphate from bicarbonate: step 1/1. Its pathway is pyrimidine metabolism; UMP biosynthesis via de novo pathway; (S)-dihydroorotate from bicarbonate: step 1/3. Functionally, large subunit of the glutamine-dependent carbamoyl phosphate synthetase (CPSase). CPSase catalyzes the formation of carbamoyl phosphate from the ammonia moiety of glutamine, carbonate, and phosphate donated by ATP, constituting the first step of 2 biosynthetic pathways, one leading to arginine and/or urea and the other to pyrimidine nucleotides. The large subunit (synthetase) binds the substrates ammonia (free or transferred from glutamine from the small subunit), hydrogencarbonate and ATP and carries out an ATP-coupled ligase reaction, activating hydrogencarbonate by forming carboxy phosphate which reacts with ammonia to form carbamoyl phosphate. The chain is Carbamoyl phosphate synthase large chain from Escherichia coli (strain K12).